The following is an 82-amino-acid chain: Penaeidin-3e (82 aa).

The first 19 residues, 1–19 (MRLVVCLVFLAPFALVCHG), serve as a signal peptide directing secretion. A Pyrrolidone carboxylic acid modification is found at Gln-20. Disulfide bonds link Cys-51-Cys-66, Cys-55-Cys-73, and Cys-67-Cys-74. Ser-81 is modified (serine amide).

The protein belongs to the penaeidin family.

Its subcellular location is the cytoplasmic granule. Antibacterial and antifungal activity. Presents chitin-binding activity. In Penaeus vannamei (Whiteleg shrimp), this protein is Penaeidin-3e.